A 124-amino-acid polypeptide reads, in one-letter code: UPF0102 protein BL0935 (124 aa).

Belongs to the UPF0102 family.

The protein is UPF0102 protein BL0935 of Bifidobacterium longum (strain NCC 2705).